The chain runs to 312 residues: Ribosomal RNA small subunit methyltransferase H (312 aa).

Residues 33-35, Asp-53, Phe-79, Asp-100, and Gln-107 each bind S-adenosyl-L-methionine; that span reads AGH.

This sequence belongs to the methyltransferase superfamily. RsmH family.

The protein resides in the cytoplasm. The catalysed reaction is cytidine(1402) in 16S rRNA + S-adenosyl-L-methionine = N(4)-methylcytidine(1402) in 16S rRNA + S-adenosyl-L-homocysteine + H(+). Functionally, specifically methylates the N4 position of cytidine in position 1402 (C1402) of 16S rRNA. The polypeptide is Ribosomal RNA small subunit methyltransferase H (Clostridium acetobutylicum (strain ATCC 824 / DSM 792 / JCM 1419 / IAM 19013 / LMG 5710 / NBRC 13948 / NRRL B-527 / VKM B-1787 / 2291 / W)).